The chain runs to 1199 residues: AP-3 complex subunit delta-1 (1199 aa).

N-acetylalanine is present on Ala-2. 9 HEAT repeats span residues 34–71 (KYISQCIDEIKQELKQDNIAVKANAVCKLTYLQMLGYD), 142–179 (DLARDLANDIMTLMSHTKPYIRKKAVLIMYKVFLKYPE), 180–216 (SLRPAFPRLKEKLEDPDPGVQSAAVNVICELARRNPK), 218–254 (YLSLAPLFFKLMTSSTNNWVLIKIIKLFGALTPLEPR), 257–296 (KKLIEPLTNLIHSTSAMSLLYECVNTVIAVLISLSSGMPN), 298–336 (SASIQLCVQKLRILIEDSDQNLKYLGLLAMSKILKTHPK), 337–373 (SVQSHKDLILQCLDDKDESIRLRALDLLYGMVSKKNL), 375–409 (EIVKKLMTHVDKAEGTTYRDELLTKIIDICSQSNY), and 521–558 (VYVQNVVKLYASILQQKEQAADTEAAQEVTQLLVERLP). 2 disordered regions span residues 623-695 (LDAW…RYQD) and 724-963 (YVKL…EPIP). Residues Ser-632, Ser-634, and Ser-636 each carry the phosphoserine modification. Basic and acidic residues-rich tracts occupy residues 639 to 651 (EKPKAIFHEEEPR) and 665 to 675 (LARRREARKQE). Residues 659-679 (EEDEEELARRREARKQEQANN) adopt a coiled-coil conformation. Ser-688 carries the post-translational modification Phosphoserine. Residues 722–750 (DQYVKLEEQRRHRQRLEKDKKRKKKEKGK) adopt a coiled-coil conformation. A compositionally biased stretch (basic residues) spans 732 to 754 (RHRQRLEKDKKRKKKEKGKRRHS). Phosphoserine occurs at positions 754 and 755. Thr-758 carries the post-translational modification Phosphothreonine. Phosphoserine occurs at positions 760, 784, and 825. Residues 773–790 (ITEEMPENALPSDEDDKD) are compositionally biased toward acidic residues. Residues 791–836 (PNDPYRALDIDLDKPLADSEKLPVQKHRNAEAVKSPEKEGVLGVEK) are compositionally biased toward basic and acidic residues. Basic residues predominate over residues 837–846 (KSKKPKKKEK). A coiled-coil region spans residues 843–863 (KKEKKTKEREREKKDKKGEDL). Residues 847-862 (KTKEREREKKDKKGED) are compositionally biased toward basic and acidic residues. Pro residues predominate over residues 870 to 880 (TPPPAAAPIPA). Basic and acidic residues predominate over residues 894-916 (PKDECEVLKGEEEDHVDHDQERK). A coiled-coil region spans residues 911–934 (HDQERKSSRHKKKKHRKEKEKEER). The span at 917 to 928 (SSRHKKKKHRKE) shows a compositional bias: basic residues.

This sequence belongs to the adaptor complexes large subunit family. As to quaternary structure, adaptor protein complex 3 (AP-3) is a heterotetramer composed of two large adaptins (delta-type subunit AP3D1 and beta-type subunit AP3B1 or AP3B2), a medium adaptin (mu-type subunit AP3M1 or AP3M2) and a small adaptin (sigma-type subunit APS1 or AP3S2). AP-3 associates with the BLOC-1 complex. Interacts with SLC30A2. Interacts with CLN3 (via dileucine motif); this interaction facilitates lysosomal targeting.

The protein resides in the cytoplasm. It is found in the golgi apparatus membrane. In terms of biological role, part of the AP-3 complex, an adaptor-related complex which is not clathrin-associated. The complex is associated with the Golgi region as well as more peripheral structures. It facilitates the budding of vesicles from the Golgi membrane and may be directly involved in trafficking to lysosomes. Involved in process of CD8+ T-cell and NK cell degranulation. In concert with the BLOC-1 complex, AP-3 is required to target cargos into vesicles assembled at cell bodies for delivery into neurites and nerve terminals. In Mus musculus (Mouse), this protein is AP-3 complex subunit delta-1 (Ap3d1).